The following is a 366-amino-acid chain: tRNA/tmRNA (uracil-C(5))-methyltransferase (366 aa).

Residues Q190, Y218, N223, E239, and D299 each contribute to the S-adenosyl-L-methionine site. C324 acts as the Nucleophile in catalysis. E358 acts as the Proton acceptor in catalysis.

This sequence belongs to the class I-like SAM-binding methyltransferase superfamily. RNA M5U methyltransferase family. TrmA subfamily.

It catalyses the reaction uridine(54) in tRNA + S-adenosyl-L-methionine = 5-methyluridine(54) in tRNA + S-adenosyl-L-homocysteine + H(+). The enzyme catalyses uridine(341) in tmRNA + S-adenosyl-L-methionine = 5-methyluridine(341) in tmRNA + S-adenosyl-L-homocysteine + H(+). Dual-specificity methyltransferase that catalyzes the formation of 5-methyluridine at position 54 (m5U54) in all tRNAs, and that of position 341 (m5U341) in tmRNA (transfer-mRNA). In Escherichia coli O157:H7, this protein is tRNA/tmRNA (uracil-C(5))-methyltransferase.